A 316-amino-acid polypeptide reads, in one-letter code: MFASISPYYGVSFFEFFIVFFSRLFSGKLFYDHLYIDDIQVIVFFAIAVSCSIIGTFLVLKKMAMYANVVSHTILFGLVCACLFTHQLTHLSMQNLTIAAISTTLLTGASIHFIRNVFKVAEEASTALVFSLLFSASLLLLVFLTRNAHVGTELVIGNADALAKTDIFPVFLVLLXNLGVSYCFFSSFICVSFDTVFAFSLGIRVKLIDYLMMFLLSASIVGAFKAVGVLMSLAFLLVPGLIAKLIASSVQEMMGYSMIFGVLSALIAPALSRSILSVHGIGLSTSGLAVCLLLVFYIGTLATVFVRRHILLQSKN.

10 consecutive transmembrane segments (helical) span residues 1 to 21 (MFAS…IVFF), 39 to 59 (IQVI…TFLV), 64 to 84 (AMYA…ACLF), 94 to 114 (QNLT…IHFI), 124 to 144 (ASTA…LVFL), 171 to 191 (FLVL…FICV), 196 to 216 (VFAF…MFLL), 226 to 246 (AVGV…AKLI), 252 to 272 (EMMG…PALS), and 286 to 306 (SGLA…TVFV).

It belongs to the ABC-3 integral membrane protein family.

Its subcellular location is the cell inner membrane. Part of an ATP-driven transport system TC_0338/TC_0339/TC_0341/TC_0342 for a metal. The chain is Probable metal transport system membrane protein TC_0342 from Chlamydia muridarum (strain MoPn / Nigg).